The chain runs to 39 residues: LIM/homeobox protein xLIM-2B (39 aa).

The homeobox DNA-binding region spans 1–39 (KAKQLETLKAAFAATPKPTRHIREQLAQETGLNMRVIQV).

It is found in the nucleus. This is LIM/homeobox protein xLIM-2B (lim2b) from Xenopus laevis (African clawed frog).